The chain runs to 180 residues: RNA polymerase sigma-E factor (180 aa).

Residues 36–49 carry the Polymerase core binding motif; the sequence is DLLQTALARTYGRW. The segment at residues 130-149 is a DNA-binding region (H-T-H motif); the sequence is TEETAAALGMSAGTVKSTLH.

This sequence belongs to the sigma-70 factor family. ECF subfamily.

The protein localises to the cytoplasm. In terms of biological role, sigma factors are initiation factors that promote the attachment of RNA polymerase to specific initiation sites and are then released. This sigma factor is required for the synthesis of the antibiotic actinomycin. This is RNA polymerase sigma-E factor (sigE) from Streptomyces antibioticus.